We begin with the raw amino-acid sequence, 273 residues long: 2,3,4,5-tetrahydropyridine-2,6-dicarboxylate N-succinyltransferase (273 aa).

Substrate contacts are provided by arginine 104 and aspartate 141.

It belongs to the transferase hexapeptide repeat family. In terms of assembly, homotrimer.

Its subcellular location is the cytoplasm. The catalysed reaction is (S)-2,3,4,5-tetrahydrodipicolinate + succinyl-CoA + H2O = (S)-2-succinylamino-6-oxoheptanedioate + CoA. It participates in amino-acid biosynthesis; L-lysine biosynthesis via DAP pathway; LL-2,6-diaminopimelate from (S)-tetrahydrodipicolinate (succinylase route): step 1/3. This Acinetobacter baylyi (strain ATCC 33305 / BD413 / ADP1) protein is 2,3,4,5-tetrahydropyridine-2,6-dicarboxylate N-succinyltransferase.